A 176-amino-acid chain; its full sequence is MAKPTAPCFEDVLGCQAALYEWAESYDTKDWDRLAQCIAPTLRIDYRAFLNKLWEEMPAPEFLLMASDLKFLGNRRLKTQHFVGGASKWLQTSEDEITGQHQMRVAHQKYADDALSEVALKGHAHGHATIWYRRVEGQWRFAGIEPGIRWSEYDHDRIFFEGEEKLGEPQSDECAC.

Positions 26 and 46 each coordinate substrate. Active-site residues include histidine 81 and histidine 107.

This sequence belongs to the scytalone dehydratase family.

Its pathway is secondary metabolite biosynthesis. Functionally, scytalone dehydratase-like protein; part of the gene cluster that mediates the biosynthesis of the tetrahydroxanthone dimer secalonic acid D. The pathway begins with the synthesis of atrochrysone thioester by the polyketide synthase AacuL. The atrochrysone carboxyl ACP thioesterase AacuM then breaks the thioester bond and releases the atrochrysone carboxylic acid from AacuL. Atrochrysone carboxylic acid is decarboxylated by the decarboxylase AacuI, and oxidized by the anthrone oxygenase AacuG to yield emodin. Emodin is then reduced to emodin hydroquinone by a yet unidentified oxidoreductase. A-ring reduction by the short chain dehydrogenase AacuN, dehydration by the scytalone dehydratase-like protein AacuK and probable spontaneous re-oxidation, results in overall deoxygenation to chrysophanol. Baeyer-Villiger oxidation by the Baeyer-Villiger monooxygenase (BVMO) AacuH then yields monodictyphenone. Monodictyphenone is transformed into compounds with the tetrahydroxanthone skeleton via methylesterification by the methyltransferase AacuQ, followed by the action of the flavin-dependent monooxygenase AacuC, the isomerase AacuP, and the short chain dehydrogenase/reductase AacuF or AacuD. AacuF and AacuD should accept the same compound as a substrate but perform the ketoreduction with a different stereoselectivity, thus yielding blennolides B and A, respectively. In the final step of the biosynthesis, the cytochrome P450 monooxygenase AacuE accepts blennolide B and/or blennolide A to conduct the dimerization reaction to furnish the tetrahydroxanthone dimers, secalonic acids D, B, and F. The protein is Scytalone dehydratase-like protein AacuK of Aspergillus aculeatus (strain ATCC 16872 / CBS 172.66 / WB 5094).